The sequence spans 481 residues: Aspartyl/glutamyl-tRNA(Asn/Gln) amidotransferase subunit B (481 aa).

Belongs to the GatB/GatE family. GatB subfamily. In terms of assembly, heterotrimer of A, B and C subunits.

It carries out the reaction L-glutamyl-tRNA(Gln) + L-glutamine + ATP + H2O = L-glutaminyl-tRNA(Gln) + L-glutamate + ADP + phosphate + H(+). The enzyme catalyses L-aspartyl-tRNA(Asn) + L-glutamine + ATP + H2O = L-asparaginyl-tRNA(Asn) + L-glutamate + ADP + phosphate + 2 H(+). In terms of biological role, allows the formation of correctly charged Asn-tRNA(Asn) or Gln-tRNA(Gln) through the transamidation of misacylated Asp-tRNA(Asn) or Glu-tRNA(Gln) in organisms which lack either or both of asparaginyl-tRNA or glutaminyl-tRNA synthetases. The reaction takes place in the presence of glutamine and ATP through an activated phospho-Asp-tRNA(Asn) or phospho-Glu-tRNA(Gln). The sequence is that of Aspartyl/glutamyl-tRNA(Asn/Gln) amidotransferase subunit B from Fusobacterium nucleatum subsp. nucleatum (strain ATCC 25586 / DSM 15643 / BCRC 10681 / CIP 101130 / JCM 8532 / KCTC 2640 / LMG 13131 / VPI 4355).